Consider the following 184-residue polypeptide: Peptide deformylase (184 aa).

Residues cysteine 98 and histidine 140 each contribute to the Fe cation site. Residue glutamate 141 is part of the active site. Histidine 144 provides a ligand contact to Fe cation.

It belongs to the polypeptide deformylase family. Fe(2+) serves as cofactor.

The catalysed reaction is N-terminal N-formyl-L-methionyl-[peptide] + H2O = N-terminal L-methionyl-[peptide] + formate. In terms of biological role, removes the formyl group from the N-terminal Met of newly synthesized proteins. Requires at least a dipeptide for an efficient rate of reaction. N-terminal L-methionine is a prerequisite for activity but the enzyme has broad specificity at other positions. This is Peptide deformylase from Bacteroides fragilis (strain ATCC 25285 / DSM 2151 / CCUG 4856 / JCM 11019 / LMG 10263 / NCTC 9343 / Onslow / VPI 2553 / EN-2).